The following is a 272-amino-acid chain: Tryptophan synthase alpha chain (272 aa).

Residues glutamate 49 and aspartate 60 each act as proton acceptor in the active site.

It belongs to the TrpA family. In terms of assembly, tetramer of two alpha and two beta chains.

It catalyses the reaction (1S,2R)-1-C-(indol-3-yl)glycerol 3-phosphate + L-serine = D-glyceraldehyde 3-phosphate + L-tryptophan + H2O. It functions in the pathway amino-acid biosynthesis; L-tryptophan biosynthesis; L-tryptophan from chorismate: step 5/5. In terms of biological role, the alpha subunit is responsible for the aldol cleavage of indoleglycerol phosphate to indole and glyceraldehyde 3-phosphate. This chain is Tryptophan synthase alpha chain, found in Acidithiobacillus ferrooxidans (strain ATCC 23270 / DSM 14882 / CIP 104768 / NCIMB 8455) (Ferrobacillus ferrooxidans (strain ATCC 23270)).